A 133-amino-acid polypeptide reads, in one-letter code: ATP synthase epsilon chain, chloroplastic (133 aa).

This sequence belongs to the ATPase epsilon chain family. In terms of assembly, F-type ATPases have 2 components, CF(1) - the catalytic core - and CF(0) - the membrane proton channel. CF(1) has five subunits: alpha(3), beta(3), gamma(1), delta(1), epsilon(1). CF(0) has three main subunits: a, b and c.

The protein localises to the plastid. It is found in the chloroplast thylakoid membrane. Produces ATP from ADP in the presence of a proton gradient across the membrane. The sequence is that of ATP synthase epsilon chain, chloroplastic from Nicotiana tomentosiformis (Tobacco).